The following is a 281-amino-acid chain: N-acetylmuramic acid 6-phosphate etherase (281 aa).

The SIS domain occupies Ile-63 to Arg-226. Residue Glu-91 is the Proton donor of the active site. Glu-122 is an active-site residue.

Belongs to the GCKR-like family. MurNAc-6-P etherase subfamily. Homodimer.

The enzyme catalyses N-acetyl-D-muramate 6-phosphate + H2O = N-acetyl-D-glucosamine 6-phosphate + (R)-lactate. Its pathway is amino-sugar metabolism; N-acetylmuramate degradation. In terms of biological role, specifically catalyzes the cleavage of the D-lactyl ether substituent of MurNAc 6-phosphate, producing GlcNAc 6-phosphate and D-lactate. This chain is N-acetylmuramic acid 6-phosphate etherase, found in Bacteroides fragilis (strain ATCC 25285 / DSM 2151 / CCUG 4856 / JCM 11019 / LMG 10263 / NCTC 9343 / Onslow / VPI 2553 / EN-2).